A 165-amino-acid polypeptide reads, in one-letter code: E3 ubiquitin ligase complex SCF subunit sconC (165 aa).

The interaction with the F-box domain of F-box proteins stretch occupies residues 106 to 165 (ILAANYLDIKALLDVGCKTVANMIKGKSPEEIRKTFNIQNDFTPEEEDQIRRENEWAEDR).

The protein belongs to the SKP1 family. Component of the SCF (SKP1-CUL1-F-box protein) E3 ubiquitin ligase complexes.

It participates in protein modification; protein ubiquitination. Essential component of the SCF (SKP1-CUL1-F-box protein) E3 ubiquitin ligase complexes, which mediate the ubiquitination and subsequent proteasomal degradation of target proteins. Controls sulfur metabolite repression, probably by mediating the inactivation or degradation of the metR transcription factor. The polypeptide is E3 ubiquitin ligase complex SCF subunit sconC (sconC) (Arthroderma otae (strain ATCC MYA-4605 / CBS 113480) (Microsporum canis)).